The primary structure comprises 147 residues: UPF0306 protein YhbP (147 aa).

This sequence belongs to the UPF0306 family.

This chain is UPF0306 protein YhbP, found in Shigella dysenteriae serotype 1 (strain Sd197).